Here is a 496-residue protein sequence, read N- to C-terminus: Fibronectin type III and SPRY domain-containing protein 1 (496 aa).

Residues 4 to 99 (QREALRKIIK…ALESSEELLE (96 aa)) are a coiled coil. In terms of domain architecture, COS spans 105 to 162 (LQAMDSEDFPQAAKQIKDGVTMAPAFRLSLKAKVSDNMSHLMVDFAQERQMLQALKFL). The Fibronectin type-III domain maps to 164-268 (VPSAPVIDLA…EPVTLETPAF (105 aa)). The 210-residue stretch at 268–477 (FMFRLDASTS…VTTGLQVPSA (210 aa)) folds into the B30.2/SPRY domain. The segment at 301–336 (KAREKDGKGRTASPINSPARGTPSPKRMPSGRGGRD) is disordered. Omega-N-methylarginine is present on residues Arg310 and Arg320.

As to quaternary structure, oligomerization is required for binding to microtubules. As to expression, highly expressed in brain tissues, including cerebellum, cerebral cortex, medulla, occipital pole, frontal lobe, temporal lobe and putamen. Lower expression in spinal cord.

The protein localises to the cytoplasm. It localises to the cytoskeleton. The protein resides in the microtubule organizing center. Its subcellular location is the centrosome. It is found in the nucleus. The protein localises to the cleavage furrow. May be involved in microtubule organization and stabilization. In Homo sapiens (Human), this protein is Fibronectin type III and SPRY domain-containing protein 1 (FSD1).